We begin with the raw amino-acid sequence, 350 residues long: MSKRKLTQNQQRRIQSNNAKTLHRHQHRHKSDIDWQDDMLGDFQDGTVVTRYAVHADVENEQGEIIRCNLRRTLKSVVVGDRVVWRKGKEQLQGVRGVIEAVQPRHNQIVRPDYYDGLKPIAANIDRIIIVSAVLPNLSLNIIDRYLVVCESSNIPAVIVVNKADLLSSEARIEVGLQLEIYRKIGYETLLISAKSGENMEKLTALLSEGTSIFVGQSGVGKSSLINYILPEVNAQTGKLSQVSGLGQHTTTSSRLYHLSQGGNLIDSPGIREFGLWHLDREQITNGYREFQYFLGTCKFRDCKHLHDPGCAIQLAVKEGKIDPLRFENYHRLITSLSETKSQRHFISAN.

The tract at residues 1-30 (MSKRKLTQNQQRRIQSNNAKTLHRHQHRHK) is disordered. Polar residues predominate over residues 7-20 (TQNQQRRIQSNNAK). Residues 21–30 (TLHRHQHRHK) show a composition bias toward basic residues. Residues 106–274 (HNQIVRPDYY…LIDSPGIREF (169 aa)) form the CP-type G domain. GTP contacts are provided by residues 162-165 (NKAD) and 216-224 (GQSGVGKSS). The Zn(2+) site is built by cysteine 298, cysteine 303, histidine 305, and cysteine 311.

Belongs to the TRAFAC class YlqF/YawG GTPase family. RsgA subfamily. As to quaternary structure, monomer. Associates with 30S ribosomal subunit, binds 16S rRNA. Requires Zn(2+) as cofactor.

It is found in the cytoplasm. In terms of biological role, one of several proteins that assist in the late maturation steps of the functional core of the 30S ribosomal subunit. Helps release RbfA from mature subunits. May play a role in the assembly of ribosomal proteins into the subunit. Circularly permuted GTPase that catalyzes slow GTP hydrolysis, GTPase activity is stimulated by the 30S ribosomal subunit. The protein is Small ribosomal subunit biogenesis GTPase RsgA of Histophilus somni (strain 2336) (Haemophilus somnus).